Reading from the N-terminus, the 122-residue chain is Toxin CSTX-1 (122 aa).

The signal sequence occupies residues 1 to 20 (MKVLIISAVLFITIFSNISA). Positions 21 to 47 (EIEDDFLEDESFEAEDIIPFFENEQAR) are excised as a propeptide. Disulfide bonds link Cys49–Cys64, Cys56–Cys73, Cys63–Cys91, and Cys75–Cys89. Residues 99–112 (AIETGLNIFRGLFK) are predicted alpha-helix. Arg108 is modified (arginine amide; in CSTX-2a). Lys121 is subject to Lysine amide; in omega-ctenitoxin-Cs1a.

It belongs to the neurotoxin 19 (CSTX) family. 04 (U1-Lctx) subfamily. In terms of assembly, monomer. Interacts with CSTX-13 (AC P83919) (Kd=430 nM), but does not interact with CSTX-9 (AC P58604). Expressed by the venom gland.

Its subcellular location is the secreted. The protein localises to the target cell membrane. Functionally, spider venom toxin that shows calcium channel blocking activity and exhibits cytolytic activity by affecting the outer leaflet curvature and/or pore formation across the membrane. It blocks L-type calcium channels (Cav1/CACNA1) in mammalian neurons at nanomolar concentrations. Furthermore, it produces a slow voltage-independent block of mid/low and high voltage-activated calcium channels in cockroach neurons. Potassium ions, histamine, M-ctenitoxin-Cs1a (AC P83619), CSTX-9 (AC P58604), and CSTX-13 (AC P83919) synergistically increase the insecticidal activity of this toxin. In vivo, it causes paralysis in blow flies and provokes death in drosophila. Its function is as follows. Blocks voltage-activated calcium channels (Cav). Does not induce cell membrane permeability increase when tested on Xenopus oocytes. No alpha-helical structures are detectable. Is 7-fold less neurotoxic than omega-ctenitoxin-Cs1a on drosophila flies. Blocks voltage-activated calcium channels (Cav). Is 190-fold less neurotoxic than omega-ctenitoxin-Cs1a on drosophila flies. This is Toxin CSTX-1 from Cupiennius salei (American wandering spider).